The chain runs to 226 residues: MSPFIKRGHGFMVLSFENLIDAVIVSRINRFVVKCMVNNEEVYAHLHDPGRLNEIIYPGNKIKLRKTDGKKYNYSVTFGHDGFNYTLNDARFHSMIASQFLRLGFKKEYKYMDSRIDFLLDEYLIEVKSCTLVNSKKAMFPDAVTRRGTHHLNVLLNSIQDGYRPYIMFLIFNERAECFTPNKCRDPEFSGTFYRAVKNGVSSKFLVFYIRENSIYFDKEISMCVD.

Belongs to the SfsA family.

This is Sugar fermentation stimulation protein homolog from Picrophilus torridus (strain ATCC 700027 / DSM 9790 / JCM 10055 / NBRC 100828 / KAW 2/3).